Reading from the N-terminus, the 1081-residue chain is Importin-4 (1081 aa).

Met-1 is modified (N-acetylmethionine). One can recognise an Importin N-terminal domain in the interval 24–90; it reads ATEQLQIVLR…KSLILTALQR (67 aa). HEAT repeat units lie at residues 348 to 385, 390 to 427, 431 to 471, 475 to 513, 895 to 932, and 936 to 974; these read KLCP…GAGD, RLLP…NLQP, SYSR…NLGP, PYLP…AAQA, QFVS…HGGH, and EHFP…ASPT.

It belongs to the importin beta family. As to quaternary structure, found in a cytosolic complex with ASF1 (ASF1A or ASF1B) and histones H3 and H4.

The protein resides in the cytoplasm. It localises to the nucleus. Its function is as follows. Nuclear transport receptor that mediates nuclear import of proteins, such as histones, RPS3A, TNP2 and VDR. Serves as receptor for nuclear localization signals (NLS) in cargo substrates. Is thought to mediate docking of the importin/substrate complex to the nuclear pore complex (NPC) through binding to nucleoporin and the complex is subsequently translocated through the pore by an energy requiring, Ran-dependent mechanism. At the nucleoplasmic side of the NPC, Ran binds to the importin, the importin/substrate complex dissociates and importin is re-exported from the nucleus to the cytoplasm where GTP hydrolysis releases Ran. The directionality of nuclear import is thought to be conferred by an asymmetric distribution of the GTP- and GDP-bound forms of Ran between the cytoplasm and nucleus. Mediates the nuclear import of the histone H3-H4 dimer when in complex with ASF1 (ASF1A or ASF1B). Mediates the ligand-independent nuclear import of vitamin D receptor (VDR). In vitro, mediates the nuclear import of human cytomegalovirus UL84 by recognizing a non-classical NLS. This is Importin-4 (IPO4) from Homo sapiens (Human).